Reading from the N-terminus, the 321-residue chain is MTIHAQTPEPFSMSRAFTPRRLLLAVLLVALSALVLLGQSFRVFDRAWFAVQEWRHADAWKERSIWLPDYRVRIEAQPIEGLNDDVSALTFDPDRRTLFTVTNQPAQIIELSLQGKVLRTIPLTGFGDAEAIEYISRGVYVITDERQQRLVKVRLEDDTRFIDAADAQQLSLGIGLNGNKGFEGLAYDAEGKRLFVAKERDPVRIYEIHGFPHTQADKPFAVHVVDDPGRDKRLFVRDLSSLQFDEGTGHLLALSDESRLVVELDTDGEPVSTLSLLRGMHGLKRSVPQAEGVAMDDRGVLYLVSEPNLFYVFSKDEPAQP.

A signal peptide spans 1–42 (MTIHAQTPEPFSMSRAFTPRRLLLAVLLVALSALVLLGQSFR).

It belongs to the YjiK family.

The protein resides in the cell inner membrane. Functionally, plays a role in intracellular Ca(2+) homeostasis. Involved in modulating Ca(2+)-induced swarming motility and pyocyanine production. Plays a role in regulating virulence in a Ca(2+)-dependent manner. Involved in cell protection against oxidative stress in the presence of elevated Ca(2+). The sequence is that of Calcium-regulated beta-propeller protein CarP from Pseudomonas aeruginosa (strain ATCC 15692 / DSM 22644 / CIP 104116 / JCM 14847 / LMG 12228 / 1C / PRS 101 / PAO1).